The primary structure comprises 454 residues: Glutamyl-tRNA reductase (454 aa).

Substrate-binding positions include 49–52 (TCNR), Ser109, 114–116 (ETQ), and Gln120. The Nucleophile role is filled by Cys50. Residue 189–194 (GAGKMG) coordinates NADP(+).

The protein belongs to the glutamyl-tRNA reductase family. In terms of assembly, homodimer.

It catalyses the reaction (S)-4-amino-5-oxopentanoate + tRNA(Glu) + NADP(+) = L-glutamyl-tRNA(Glu) + NADPH + H(+). It functions in the pathway porphyrin-containing compound metabolism; protoporphyrin-IX biosynthesis; 5-aminolevulinate from L-glutamyl-tRNA(Glu): step 1/2. Functionally, catalyzes the NADPH-dependent reduction of glutamyl-tRNA(Glu) to glutamate 1-semialdehyde (GSA). The protein is Glutamyl-tRNA reductase of Geobacillus kaustophilus (strain HTA426).